A 390-amino-acid polypeptide reads, in one-letter code: Nucleosome assembly protein 1-like 1 (390 aa).

Positions 1–10 (MADIDNKEQS) are enriched in basic and acidic residues. The interval 1-32 (MADIDNKEQSELDQDLEDVEEVEEEETGEETK) is disordered. The residue at position 2 (alanine 2) is an N-acetylalanine. Residue serine 10 is modified to Phosphoserine. Residues 11-28 (ELDQDLEDVEEVEEEETG) are compositionally biased toward acidic residues. A phosphothreonine mark is found at threonine 62 and threonine 64. At serine 69 the chain carries Phosphoserine. Lysine 116 is modified (N6-acetyllysine). Residues 125-150 (YEPTEEECEWKPDEEDEVSEELKEKA) carry the NAP1L motif motif. Over residues 131-143 (ECEWKPDEEDEVS) the composition is skewed to acidic residues. The interval 131-163 (ECEWKPDEEDEVSEELKEKAKIEDEKKDEEKED) is disordered. A Phosphoserine modification is found at serine 143. Over residues 144–163 (EELKEKAKIEDEKKDEEKED) the composition is skewed to basic and acidic residues. A Nuclear localization signal motif is present at residues 272–278 (IKKKQKH). The span at 345-375 (AIEDDDDDYDEEGEEADEEGEEEGDEENDPD) shows a compositional bias: acidic residues. A disordered region spans residues 345–390 (AIEDDDDDYDEEGEEADEEGEEEGDEENDPDYDPKKDQNPAECKQQ). Residues glutamate 358 and glutamate 359 each carry the 5-glutamyl polyglycine modification. Residues 376–390 (YDPKKDQNPAECKQQ) are compositionally biased toward basic and acidic residues. Cysteine 387 is subject to Cysteine methyl ester. Residue cysteine 387 is the site of S-farnesyl cysteine attachment. Positions 388–390 (KQQ) are cleaved as a propeptide — removed in mature form.

The protein belongs to the nucleosome assembly protein (NAP) family. In terms of assembly, homodimer. The dimer binds strongly and sequentially to single and double H2A-H2B heterodimers. Interacts with ERCC6; this interaction increases ERCC6 processivity. Interacts with RAD54. Interacts with SETD1A. In terms of processing, polyglycylated by TTLL10 on glutamate residues, resulting in polyglycine chains on the gamma-carboxyl group. Both polyglutamylation and polyglycylation modifications can coexist on the same protein on adjacent residues, and lowering polyglycylation levels increases polyglutamylation, and reciprocally. Post-translationally, polyglutamylated by TTLL4 on glutamate residues, resulting in polyglutamate chains on the gamma-carboxyl group. Both polyglutamylation and polyglycylation modifications can coexist on the same protein on adjacent residues, and lowering polyglycylation levels increases polyglutamylation, and reciprocally.

It is found in the nucleus. The protein localises to the melanosome. Its subcellular location is the cytoplasm. In terms of biological role, histone chaperone that plays a role in the nuclear import of H2A-H2B and nucleosome assembly. Also participates in several important DNA repair mechanisms: greatly enhances ERCC6-mediated chromatin remodeling which is essential for transcription-coupled nucleotide excision DNA repair. Also stimulates homologous recombination (HR) by RAD51 and RAD54 which is essential in mitotic DNA double strand break (DSB) repair. Plays a key role in the regulation of embryonic neurogenesis. Promotes the proliferation of neural progenitors and inhibits neuronal differentiation during cortical development. Regulates neurogenesis via the modulation of RASSF10; regulates RASSF10 expression by promoting SETD1A-mediated H3K4 methylation at the RASSF10 promoter. This is Nucleosome assembly protein 1-like 1 (Nap1l1) from Rattus norvegicus (Rat).